Here is a 353-residue protein sequence, read N- to C-terminus: Neutral protease 2 homolog AO090001000135 (353 aa).

Positions 1-19 (MRFISVSSLLLALAPALNA) are cleaved as a signal peptide. Residues 20–176 (VPVEVAGSAQ…TQAVKILERR (157 aa)) constitute a propeptide that is removed on maturation. Disulfide bonds link Cys182–Cys254 and Cys261–Cys279. His304 lines the Zn(2+) pocket. Glu305 is an active-site residue. The Zn(2+) site is built by His308 and Asp319.

The protein belongs to the peptidase M35 family. It depends on Zn(2+) as a cofactor.

It is found in the secreted. It carries out the reaction Preferential cleavage of bonds with hydrophobic residues in P1'. Also 3-Asn-|-Gln-4 and 8-Gly-|-Ser-9 bonds in insulin B chain.. Its function is as follows. Secreted metalloproteinase that allows assimilation of proteinaceous substrates. Shows high activities on basic nuclear substrates such as histone and protamine. In Aspergillus oryzae (strain ATCC 42149 / RIB 40) (Yellow koji mold), this protein is Neutral protease 2 homolog AO090001000135.